The primary structure comprises 156 residues: Small ribosomal subunit protein uS7 (156 aa).

This sequence belongs to the universal ribosomal protein uS7 family. As to quaternary structure, part of the 30S ribosomal subunit. Contacts proteins S9 and S11.

Its function is as follows. One of the primary rRNA binding proteins, it binds directly to 16S rRNA where it nucleates assembly of the head domain of the 30S subunit. Is located at the subunit interface close to the decoding center, probably blocks exit of the E-site tRNA. The polypeptide is Small ribosomal subunit protein uS7 (Janthinobacterium sp. (strain Marseille) (Minibacterium massiliensis)).